A 646-amino-acid polypeptide reads, in one-letter code: MSDEIFSTTLAYTKSPKATKRTSFQDELIRAITARSARQRSSEYSDDFDSDEIVSLGEFSDTSTDESLVRKKMNDFHISDDEEKNSPRLSFLKTKKVNRAISNDALDSSTPGSEGSSPDAQEDVTGDSLPKSQNDDREVGREIITVKPTPRMHPVKRSTSSGETSSGLDADGHFKPSPQPRSMLKKSSHTEEGVRPGVDKEHSISEASAPTPSLPRQNGTELQTEEKIYSENLDLEDSLLQSLTSSSFKESPGGCTSPGSQEKVPIKDHDGEPTEIWDSLLSNENEGSSVLVNCVTPELEQPKDGQVAADDLEEEREKGGFTEDDLTTDPLLSTSPSVITPTEPAEPAKKANEDRNTKNKKTTNNRVSSASGRLMTSEFLKRSGPTKRSPSAATSSHYLGSLKVLDQKQPRKQSLEPDKADHIRAAVYQEWLEKKNVYLHEMHRIKRIESENLRIQNEQKKAAKREEALASFEAWKAMKEKEAKRIAAKKRLEEKNKKKTEEENAMRKGEALQAFEKWKEKKLEYLKEKTRREKEYERAKKQKEEEAVAEKKKDSLTAFEKWSERKEALLKQKEKEKINERRKEELKRAEKKDKDKQAISEYEKWLEKKERQERIERKQKKRHSFLESETHPPWSPPSRTAPSKVF.

An N-acetylserine modification is found at serine 2. Tyrosine 12 carries the phosphotyrosine modification. Disordered regions lie at residues aspartate 75 to glutamate 226, serine 242 to aspartate 418, arginine 491 to alanine 511, arginine 531 to aspartate 554, leucine 570 to glutamine 597, and lysine 609 to phenylalanine 646. 2 stretches are compositionally biased toward polar residues: residues alanine 105 to aspartate 119 and arginine 157 to glycine 167. Over residues serine 188–isoleucine 204 the composition is skewed to basic and acidic residues. Composition is skewed to polar residues over residues serine 205–leucine 222, leucine 280–leucine 291, and proline 330–threonine 340. Basic and acidic residues predominate over residues glutamate 346 to threonine 357. A compositionally biased stretch (polar residues) spans threonine 386–tyrosine 398. Residues leucine 405 to aspartate 418 are compositionally biased toward basic and acidic residues. Residues methionine 442–lysine 596 are a coiled coil. Polar residues predominate over residues proline 637 to phenylalanine 646.

Binds to purified microtubules via its C-terminus.

It localises to the cytoplasm. The protein localises to the cytoskeleton. It is found in the spindle. Functionally, involved in organization of the bipolar mitotic spindle. Required for bipolar spindle assembly, mitosis progression and cytokinesis. May act by stabilizing interphase microtubules. This is Microtubule-associated protein 9 (Map9) from Mus musculus (Mouse).